A 58-amino-acid chain; its full sequence is Large ribosomal subunit protein uL30 (58 aa).

Belongs to the universal ribosomal protein uL30 family. As to quaternary structure, part of the 50S ribosomal subunit.

This is Large ribosomal subunit protein uL30 from Pseudomonas aeruginosa (strain LESB58).